Reading from the N-terminus, the 447-residue chain is Glutamyl-tRNA(Gln) amidotransferase subunit A (447 aa).

Catalysis depends on charge relay system residues lysine 51 and serine 126. Serine 150 acts as the Acyl-ester intermediate in catalysis.

Belongs to the amidase family. GatA subfamily. In terms of assembly, heterotrimer of A, B and C subunits.

It catalyses the reaction L-glutamyl-tRNA(Gln) + L-glutamine + ATP + H2O = L-glutaminyl-tRNA(Gln) + L-glutamate + ADP + phosphate + H(+). Allows the formation of correctly charged Gln-tRNA(Gln) through the transamidation of misacylated Glu-tRNA(Gln) in organisms which lack glutaminyl-tRNA synthetase. The reaction takes place in the presence of glutamine and ATP through an activated gamma-phospho-Glu-tRNA(Gln). In Helicobacter hepaticus (strain ATCC 51449 / 3B1), this protein is Glutamyl-tRNA(Gln) amidotransferase subunit A.